The primary structure comprises 184 residues: UPF0215 protein MJ1150 (184 aa).

It belongs to the UPF0215 family.

This chain is UPF0215 protein MJ1150, found in Methanocaldococcus jannaschii (strain ATCC 43067 / DSM 2661 / JAL-1 / JCM 10045 / NBRC 100440) (Methanococcus jannaschii).